The following is a 186-amino-acid chain: Elongation factor P (186 aa).

The protein belongs to the elongation factor P family.

Its subcellular location is the cytoplasm. It functions in the pathway protein biosynthesis; polypeptide chain elongation. Functionally, involved in peptide bond synthesis. Stimulates efficient translation and peptide-bond synthesis on native or reconstituted 70S ribosomes in vitro. Probably functions indirectly by altering the affinity of the ribosome for aminoacyl-tRNA, thus increasing their reactivity as acceptors for peptidyl transferase. This chain is Elongation factor P, found in Streptococcus pneumoniae (strain Hungary19A-6).